A 369-amino-acid chain; its full sequence is Fructose-bisphosphate aldolase (369 aa).

D40 is a binding site for dihydroxyacetone phosphate. S42 and T45 together coordinate D-glyceraldehyde 3-phosphate. Beta-D-fructose 1,6-bisphosphate is bound at residue R49. Residue K113 participates in D-glyceraldehyde 3-phosphate binding. Position 152 (K152) interacts with dihydroxyacetone phosphate. E195 provides a ligand contact to D-glyceraldehyde 3-phosphate. E195 functions as the Proton acceptor in the catalytic mechanism. 3 residues coordinate dihydroxyacetone phosphate: K237, S279, and G280. K237 (schiff-base intermediate with dihydroxyacetone phosphate) is an active-site residue. Residues 279 to 281 (SGG) and S307 contribute to the beta-D-fructose 1,6-bisphosphate site. Residues G309 and R310 each contribute to the dihydroxyacetone phosphate site. R310 contributes to the beta-D-fructose 1,6-bisphosphate binding site.

Belongs to the class I fructose-bisphosphate aldolase family. Homotetramer. Interacts with TRAP (via cytoplasmic domain); the interaction prevents substrate binding and thereby inhibits aldolase activity. Interacts with MTRAP (via cytoplasmic domain); MTRAP phosphorylation may increase the binding to FBPA. Interact with RH1 (via cytoplasmic domain). Interacts with RH2b (via cytoplasmic domain). Interacts with RH4 (via cytoplasmic domain). Interacts with AMA1 (via cytoplasmic domain); the interaction is weak, however it may be increased upon AMA1 phosphorylation. Interacts with EBA140 (via cytoplasmic domain); the interaction is weak. Interacts with EBA175 (via cytoplasmic domain); the interaction is weak. Interacts with EBA181 (via cytoplasmic domain); the interaction is weak. Interacts with G-actin and F-actin. May interact with ACT2/actin II; the interaction inhibits FBPA catalytic activity. Interacts with human SLC4A1/band 3 (via N-terminus); the interaction inhibits FBPA catalytic activity.

The protein resides in the cytoplasm. It is found in the membrane. The protein localises to the host cell membrane. It carries out the reaction beta-D-fructose 1,6-bisphosphate = D-glyceraldehyde 3-phosphate + dihydroxyacetone phosphate. It functions in the pathway carbohydrate degradation; glycolysis; D-glyceraldehyde 3-phosphate and glycerone phosphate from D-glucose: step 4/4. With respect to regulation, the cytoplasmic tail of TRAP and probably other adhesins acts as a competitive inhibitor as the binding sites of the glycolytic substrate fructose 1,6-bisphosphate and TRAP partially overlap. Plays a key role in glycolysis by catalyzing the cleavage of fructose 1,6-bisphosphate into dihydroxyacetone phosphate and glyceraldehyde 3-phosphate. Independently of its catalytic activity, connects the actin filaments, and thus the actomyosin motor, to cell surface adhesins of the thrombospondin-related anonymous protein (TRAP), the erythrocyte binding ligand (EBL) and reticulocyte binding homolog (RH) protein families; this interaction is probably involved in transducing the motor force across the parasite surface required for sporozoite and ookinete gliding motility and merozoite invasion. Stimulates actin polymerisation. This Plasmodium falciparum (isolate 3D7) protein is Fructose-bisphosphate aldolase.